A 1100-amino-acid chain; its full sequence is ATP-dependent DNA helicase mph1 (1100 aa).

Residues 1–21 are compositionally biased toward acidic residues; it reads MSDSDDYLQDDPDDQAFDDFA. Residues 1-250 are disordered; that stretch reads MSDSDDYLQD…RPSSFMQSSN (250 aa). Positions 38 to 61 are enriched in low complexity; it reads RNQTRNTTSRRNEDNSVASDSDSF. Residues 84–94 show a composition bias toward basic and acidic residues; that stretch reads FADHPENEASS. Residues 104-117 show a composition bias toward polar residues; sequence NNPQENIFVTQLTQ. The span at 135–146 shows a compositional bias: pro residues; sequence PPPPPPPAPTKP. 2 stretches are compositionally biased toward polar residues: residues 182–191 and 200–209; these read RLSFSTAQNS and NAPTNTAQTE. A compositionally biased stretch (acidic residues) spans 212–223; it reads DFLDDIPDDAFD. Low complexity predominate over residues 237–249; sequence SNSSRPSSFMQSS. Residues 317–485 form the Helicase ATP-binding domain; sequence ITQKGLFHNL…AVIDGLEISK (169 aa). An ATP-binding site is contributed by 330-337; that stretch reads LPTGLGKT. Positions 433-436 match the DEAH box motif; it reads DEAH. The Helicase C-terminal domain maps to 655–829; the sequence is YLKQVVLNHF…GTRFTFHDDK (175 aa). Disordered regions lie at residues 850–913 and 1003–1100; these read PEEN…PEPV and RRPA…LGRR. 2 stretches are compositionally biased toward basic residues: residues 863 to 875 and 1019 to 1028; these read RRGRVPKKPPKKF and GNKKRLRKGR. Over residues 1053-1066 the composition is skewed to polar residues; it reads QPISPEQLLSSFTD. Residues 1082–1092 show a composition bias toward acidic residues; the sequence is LELDADFEAPD.

It belongs to the DEAD box helicase family. DEAH subfamily. FANCM sub-subfamily. Interacts with the MHF histone-fold complex to form the FANCM-MHF complex.

The protein resides in the nucleus. It catalyses the reaction ATP + H2O = ADP + phosphate + H(+). Its function is as follows. ATP-dependent DNA helicase involved in DNA damage repair by homologous recombination and in genome maintenance. Capable of unwinding D-loops. Plays a role in limiting crossover recombinants during mitotic DNA double-strand break (DSB) repair. Component of a FANCM-MHF complex which promotes gene conversion at blocked replication forks, probably by reversal of the stalled fork. This is ATP-dependent DNA helicase mph1 from Aspergillus terreus (strain NIH 2624 / FGSC A1156).